We begin with the raw amino-acid sequence, 219 residues long: Chloramphenicol acetyltransferase (219 aa).

H190 serves as the catalytic Proton acceptor.

It belongs to the chloramphenicol acetyltransferase family. In terms of assembly, homotrimer.

The catalysed reaction is chloramphenicol + acetyl-CoA = chloramphenicol 3-acetate + CoA. This enzyme is an effector of chloramphenicol resistance in bacteria. This is Chloramphenicol acetyltransferase (catQ) from Clostridium perfringens.